The following is a 251-amino-acid chain: Imidazole glycerol phosphate synthase subunit HisF (251 aa).

Residues D10 and D129 contribute to the active site.

This sequence belongs to the HisA/HisF family. Heterodimer of HisH and HisF.

Its subcellular location is the cytoplasm. It carries out the reaction 5-[(5-phospho-1-deoxy-D-ribulos-1-ylimino)methylamino]-1-(5-phospho-beta-D-ribosyl)imidazole-4-carboxamide + L-glutamine = D-erythro-1-(imidazol-4-yl)glycerol 3-phosphate + 5-amino-1-(5-phospho-beta-D-ribosyl)imidazole-4-carboxamide + L-glutamate + H(+). Its pathway is amino-acid biosynthesis; L-histidine biosynthesis; L-histidine from 5-phospho-alpha-D-ribose 1-diphosphate: step 5/9. In terms of biological role, IGPS catalyzes the conversion of PRFAR and glutamine to IGP, AICAR and glutamate. The HisF subunit catalyzes the cyclization activity that produces IGP and AICAR from PRFAR using the ammonia provided by the HisH subunit. The protein is Imidazole glycerol phosphate synthase subunit HisF of Cutibacterium acnes (strain DSM 16379 / KPA171202) (Propionibacterium acnes).